A 497-amino-acid chain; its full sequence is Carboxypeptidase Y homolog ARB_02032 (497 aa).

The signal sequence occupies residues 1–18; sequence MRFTQIVAAALCLGATEA. N-linked (GlcNAc...) asparagine glycosylation is present at Asn88. Residue Ser204 is part of the active site. N-linked (GlcNAc...) asparagine glycosylation is found at Asn263 and Asn393. The active site involves Asp403. An N-linked (GlcNAc...) asparagine glycan is attached at Asn417. Residue His469 is part of the active site.

The protein belongs to the peptidase S10 family.

The protein resides in the secreted. It catalyses the reaction Release of a C-terminal amino acid with broad specificity.. Its function is as follows. Involved in degradation of small peptides. The polypeptide is Carboxypeptidase Y homolog ARB_02032 (Arthroderma benhamiae (strain ATCC MYA-4681 / CBS 112371) (Trichophyton mentagrophytes)).